A 156-amino-acid polypeptide reads, in one-letter code: Small ribosomal subunit protein uS7 (156 aa).

It belongs to the universal ribosomal protein uS7 family. Part of the 30S ribosomal subunit. Contacts proteins S9 and S11.

Its function is as follows. One of the primary rRNA binding proteins, it binds directly to 16S rRNA where it nucleates assembly of the head domain of the 30S subunit. Is located at the subunit interface close to the decoding center, probably blocks exit of the E-site tRNA. This is Small ribosomal subunit protein uS7 from Macrococcus caseolyticus (strain JCSC5402) (Macrococcoides caseolyticum).